The primary structure comprises 860 residues: DNA mismatch repair protein MutS (860 aa).

Residue 625 to 632 (GPNMGGKS) participates in ATP binding.

Belongs to the DNA mismatch repair MutS family.

Functionally, this protein is involved in the repair of mismatches in DNA. It is possible that it carries out the mismatch recognition step. This protein has a weak ATPase activity. The sequence is that of DNA mismatch repair protein MutS from Aeromonas hydrophila subsp. hydrophila (strain ATCC 7966 / DSM 30187 / BCRC 13018 / CCUG 14551 / JCM 1027 / KCTC 2358 / NCIMB 9240 / NCTC 8049).